Here is a 977-residue protein sequence, read N- to C-terminus: DNA-directed RNA polymerase 3B, chloroplastic (977 aa).

The N-terminal 71 residues, 1–71 (MASTASYSPS…NNIQSQTTVC (71 aa)), are a transit peptide targeting the chloroplast. Active-site residues include D678, K753, and D910.

It belongs to the phage and mitochondrial RNA polymerase family.

Its subcellular location is the plastid. It localises to the chloroplast. The catalysed reaction is RNA(n) + a ribonucleoside 5'-triphosphate = RNA(n+1) + diphosphate. DNA-dependent RNA polymerase catalyzes the transcription of DNA into RNA using the four ribonucleoside triphosphates as substrates. The sequence is that of DNA-directed RNA polymerase 3B, chloroplastic (RPOT3-TOM) from Nicotiana tabacum (Common tobacco).